Here is an 862-residue protein sequence, read N- to C-terminus: AP-1 complex subunit gamma-2 (862 aa).

HEAT repeat units follow at residues 1-28 (MNPFSSGTRLSDMIRAIRASKTAAEERA), 29-65 (VVRKECAAIRASINENDQDYRHRDLAKLMFIHMLGYP), 101-136 (EVLMLVTNSLKQDLNHTNQYIVGLALCALGNICSAE), 137-173 (MARDLAPEVERLLQFRDPNIRKKAALCAIRIIRKVPD), 308-345 (GLRVLAINILGKFLSNRDNNIRYVALNMLMRSLTVDSQ), 346-382 (AVQRHRATILECVKDSDASIQKRALELIYLLVNENNV), 384-417 (PLAKELIEYLEVSEQDFKGDLTAKICSIVEKFAP), 418-454 (EKIWYIDQMLKVLSEAGTYVKEDVWHALIVVITNAPD), 458-496 (YTVRALYRALHTSFEQETLVRVAIWCIGEYADLLVNNAG), 507-545 (TESDAVDVVENAIKHHLSDVTTKAMALIALLKISSRFPS), and 560-599 (SFVLELQQRSLEFSSVIQKHQNIRSSLVERMPVLDEATFS). A GAE domain is found at 744–859 (AAYPSIVAFE…LEEGQINNFP (116 aa)).

This sequence belongs to the adaptor complexes large subunit family. In terms of assembly, adaptor protein complex 1 (AP-1) is a heterotetramer composed of two large adaptins (gamma-type subunit and beta-type subunit), a medium adaptin (mu-type subunit) and a small adaptin (sigma-type subunit).

The protein localises to the golgi apparatus. The protein resides in the cytoplasmic vesicle. Its subcellular location is the clathrin-coated vesicle membrane. In terms of biological role, subunit of clathrin-associated adaptor protein complex 1 that plays a role in protein sorting at the trans-Golgi network and early endosomes (TGN/EE). The AP complexes mediate both the recruitment of clathrin to membranes and the recognition of sorting signals within the cytosolic tails of transmembrane cargo molecules. The polypeptide is AP-1 complex subunit gamma-2 (Arabidopsis thaliana (Mouse-ear cress)).